Consider the following 356-residue polypeptide: MSTVTITDLARENVRNLTPYQSARRLGGNGDVWLNANEYPTAVEFQLTQQTLNRYPECQPKAVIENYAQYAGVKPEQVLVSRGADEGIELLIRAFCEPGKDAILYYPPTYGMYSVSAETIGVECRTVPTLDNWQLDLQGISDKLDGVKVVYVCSPNNPTGQLINPQDFRILLELTRGKAIVVADEAYIEFCPQASLAGWLTEYPHLAILRTLSKAFALAGLRCGFTLANEEVINLLMKVIAPYPLSTPVADIAAQALSPQGIVAMRERVAQIIAEREYLIAALKEISCVEQVFDSETNYILARFKASSAVFKSLWDQGIILRDQNKQPSLSGCLRITVGTREESQRVIDALRAEQV.

Position 214 is an N6-(pyridoxal phosphate)lysine (lysine 214).

Belongs to the class-II pyridoxal-phosphate-dependent aminotransferase family. Histidinol-phosphate aminotransferase subfamily. As to quaternary structure, homodimer. Pyridoxal 5'-phosphate serves as cofactor.

The enzyme catalyses L-histidinol phosphate + 2-oxoglutarate = 3-(imidazol-4-yl)-2-oxopropyl phosphate + L-glutamate. The protein operates within amino-acid biosynthesis; L-histidine biosynthesis; L-histidine from 5-phospho-alpha-D-ribose 1-diphosphate: step 7/9. The chain is Histidinol-phosphate aminotransferase from Escherichia coli O17:K52:H18 (strain UMN026 / ExPEC).